The chain runs to 377 residues: Nitric oxide reductase FlRd-NAD(+) reductase (377 aa).

This sequence belongs to the FAD-dependent oxidoreductase family. Requires FAD as cofactor.

It localises to the cytoplasm. The catalysed reaction is 2 reduced [nitric oxide reductase rubredoxin domain] + NAD(+) + H(+) = 2 oxidized [nitric oxide reductase rubredoxin domain] + NADH. It participates in nitrogen metabolism; nitric oxide reduction. In terms of biological role, one of at least two accessory proteins for anaerobic nitric oxide (NO) reductase. Reduces the rubredoxin moiety of NO reductase. This chain is Nitric oxide reductase FlRd-NAD(+) reductase, found in Escherichia coli (strain K12 / MC4100 / BW2952).